We begin with the raw amino-acid sequence, 329 residues long: Quinolinate synthase (329 aa).

Residues His44 and Ser61 each contribute to the iminosuccinate site. Cys106 is a [4Fe-4S] cluster binding site. Residues 132-134 (YIN) and Ser149 contribute to the iminosuccinate site. Cys192 serves as a coordination point for [4Fe-4S] cluster. Iminosuccinate-binding positions include 218–220 (HPE) and Thr235. Position 285 (Cys285) interacts with [4Fe-4S] cluster.

The protein belongs to the quinolinate synthase family. Type 2 subfamily. It depends on [4Fe-4S] cluster as a cofactor.

The protein localises to the plastid. It localises to the cyanelle. It catalyses the reaction iminosuccinate + dihydroxyacetone phosphate = quinolinate + phosphate + 2 H2O + H(+). Its pathway is cofactor biosynthesis; NAD(+) biosynthesis; quinolinate from iminoaspartate: step 1/1. In terms of biological role, catalyzes the condensation of iminoaspartate with dihydroxyacetone phosphate to form quinolinate. The sequence is that of Quinolinate synthase from Cyanophora paradoxa.